Consider the following 75-residue polypeptide: Caerin-1.1 (75 aa).

A signal peptide spans 1-22 (MASLKKSLFLVLLLGFVSVSIC). The propeptide occupies 23–49 (EEEKRQEDEDEHEEEGESQEEGSEEKR). Residues 24-49 (EEKRQEDEDEHEEEGESQEEGSEEKR) are disordered. Positions 30-45 (DEDEHEEEGESQEEGS) are enriched in acidic residues. At leucine 74 the chain carries Leucine amide.

The protein belongs to the frog skin active peptide (FSAP) family. Caerin subfamily. The major product is Caerin-1.1; in addition, different peptides are produced that are missing some amino acid residues at the N-terminus or C-terminus. Caerin-1.1.1 and Caerin-1.1.4 are inactive. Expressed by the skin parotoid and/or rostral glands.

It is found in the secreted. In terms of biological role, antimicrobial peptide with antibacterial and antiviral activities. Adopts an alpha helical conformation which can disrupt bacterial membranes. Inhibits the formation of NO by neuronal nitric oxide synthase (nNOS) at micromolar concentrations. Acts by a non-competitive mechanism, probably by binding to calcium/calmodulin and as a consequence blocking calmodulin attachment to nNOS. Its function is as follows. Is inactive. The sequence is that of Caerin-1.1 from Ranoidea caerulea (Green tree frog).